We begin with the raw amino-acid sequence, 335 residues long: Olfactory receptor 52B6 (335 aa).

At 1–45 (MAQVRALHKIMALFSANSIGAMNNSDTRIAGCFLTGIPGLEQLHI) the chain is on the extracellular side. Asn23 is a glycosylation site (N-linked (GlcNAc...) asparagine). The helical transmembrane segment at 46-66 (WLSIPFCIMYITALEGNGILI) threads the bilayer. The Cytoplasmic segment spans residues 67-74 (CVILSQAI). Residues 75–95 (LHEPMYIFLSMLASADVLLST) traverse the membrane as a helical segment. Topologically, residues 96-119 (TTMPKALANLWLGYSLISFDGCLT) are extracellular. An intrachain disulfide couples Cys117 to Cys208. The helical transmembrane segment at 120 to 139 (QMFFIHFLFIHSAVLLAMAF) threads the bilayer. The Cytoplasmic segment spans residues 140–158 (DRYVAICSPLRYVTILTSK). A helical membrane pass occupies residues 159–179 (VIGKIVTAALSHSFIIMFPSI). At 180–215 (FLLEHLHYCQINIIAHTFCEHMGIAHLSCSDISINV) the chain is on the extracellular side. Residues 216–236 (WYGLAAALLSTGLDIMLITVS) form a helical membrane-spanning segment. Topologically, residues 237–256 (YIHILQAVFRLLSQDARSKA) are cytoplasmic. The helical transmembrane segment at 257 to 277 (LSTCGSHICVILLFYVPALFS) threads the bilayer. At 278–293 (VFAYRFGGRSVPCYVH) the chain is on the extracellular side. The helical transmembrane segment at 294 to 314 (ILLASLYVVIPPMLNPVIYGV) threads the bilayer. The Cytoplasmic portion of the chain corresponds to 315–335 (RTKPILEGAKQMFSNLAKGSK).

Belongs to the G-protein coupled receptor 1 family.

It localises to the cell membrane. Functionally, odorant receptor. The protein is Olfactory receptor 52B6 (OR52B6) of Homo sapiens (Human).